The sequence spans 239 residues: MKNDVISPEFDENGRPLRRIRSFVRRQGRLTKGQEHALENYWPVMGVEFSEAPVDFATLFGREAPVTLEIGFGMGASLVAMAKARPEQNFLGIEVHSPGVGACLASANEEGVENLRVMCHDAVEVLHKMIPDNSLSMVQLFFPDPWHKARHNKRRIVQVPFAELVLSKLKLGGVFHMATDWEAYAEHMLEVMSSIDGYKNLSESNDYVPRPESRPVTKFEQRGHRLGHGVWDLMFERVK.

The S-adenosyl-L-methionine site is built by E69, E94, D121, and D144. D144 is an active-site residue. Substrate is bound at residue K148. Residues 150 to 155 (RHNKRR) form an interaction with RNA region. Substrate is bound by residues D180 and 217–220 (TKFE).

This sequence belongs to the class I-like SAM-binding methyltransferase superfamily. TrmB family. In terms of assembly, monomer.

The enzyme catalyses guanosine(46) in tRNA + S-adenosyl-L-methionine = N(7)-methylguanosine(46) in tRNA + S-adenosyl-L-homocysteine. The protein operates within tRNA modification; N(7)-methylguanine-tRNA biosynthesis. In terms of biological role, catalyzes the formation of N(7)-methylguanine at position 46 (m7G46) in tRNA. The chain is tRNA (guanine-N(7)-)-methyltransferase from Salmonella typhimurium (strain LT2 / SGSC1412 / ATCC 700720).